The chain runs to 210 residues: Uridine kinase (210 aa).

Gly-12 to Thr-19 is an ATP binding site.

This sequence belongs to the uridine kinase family.

The protein resides in the cytoplasm. It carries out the reaction uridine + ATP = UMP + ADP + H(+). It catalyses the reaction cytidine + ATP = CMP + ADP + H(+). Its pathway is pyrimidine metabolism; CTP biosynthesis via salvage pathway; CTP from cytidine: step 1/3. It participates in pyrimidine metabolism; UMP biosynthesis via salvage pathway; UMP from uridine: step 1/1. The chain is Uridine kinase from Bacillus pumilus (strain SAFR-032).